The following is a 360-amino-acid chain: D-alanine--D-alanine ligase (360 aa).

An ATP-grasp domain is found at 146–352 (KLCAVQAGIH…FTELIDRLVR (207 aa)). ATP is bound at residue 179–234 (KKRFAPPFFVKPANLGSSVGIAKIHSFDELENALDEACRLDVKILVEKAIEGREVE). Mg(2+) is bound by residues D305, E319, and N321.

This sequence belongs to the D-alanine--D-alanine ligase family. It depends on Mg(2+) as a cofactor. Mn(2+) is required as a cofactor.

It localises to the cytoplasm. The catalysed reaction is 2 D-alanine + ATP = D-alanyl-D-alanine + ADP + phosphate + H(+). The protein operates within cell wall biogenesis; peptidoglycan biosynthesis. Cell wall formation. The chain is D-alanine--D-alanine ligase from Chlorobium phaeobacteroides (strain BS1).